Consider the following 418-residue polypeptide: Thyroxine-binding globulin (418 aa).

A signal peptide spans 1 to 20 (MSMFFYLFLLVLGLQATIHC). N-linked (GlcNAc...) asparagine glycosylation is found at asparagine 24, asparagine 39, asparagine 102, asparagine 168, asparagine 227, and asparagine 256. 2 residues coordinate thyroxine: asparagine 296 and lysine 401.

This sequence belongs to the serpin family. Expressed by the liver and secreted in plasma.

The protein localises to the secreted. Functionally, major thyroid hormone transport protein in serum. The polypeptide is Thyroxine-binding globulin (Serpina7) (Rattus norvegicus (Rat)).